Reading from the N-terminus, the 66-residue chain is Beta-toxin Cll1m (66 aa).

Positions 1 to 66 constitute an LCN-type CS-alpha/beta domain; it reads KEGYIVNLST…VWPLPKKTCT (66 aa). 4 cysteine pairs are disulfide-bonded: Cys12/Cys65, Cys16/Cys41, Cys25/Cys46, and Cys29/Cys48. At Thr66 the chain carries Threonine amide.

The protein belongs to the long (4 C-C) scorpion toxin superfamily. Sodium channel inhibitor family. Beta subfamily. In terms of tissue distribution, expressed by the venom gland.

It localises to the secreted. Beta toxins bind voltage-independently at site-4 of sodium channels (Nav) and shift the voltage of activation toward more negative potentials thereby affecting sodium channel activation and promoting spontaneous and repetitive firing. In Centruroides limpidus (Mexican scorpion), this protein is Beta-toxin Cll1m.